A 193-amino-acid chain; its full sequence is Potassium-transporting ATPase KdpC subunit (193 aa).

A helical transmembrane segment spans residues 14-34 (ITFTFLVLCGLVYPLIVTGIA).

This sequence belongs to the KdpC family. The system is composed of three essential subunits: KdpA, KdpB and KdpC.

The protein localises to the cell membrane. Its function is as follows. Part of the high-affinity ATP-driven potassium transport (or Kdp) system, which catalyzes the hydrolysis of ATP coupled with the electrogenic transport of potassium into the cytoplasm. This subunit acts as a catalytic chaperone that increases the ATP-binding affinity of the ATP-hydrolyzing subunit KdpB by the formation of a transient KdpB/KdpC/ATP ternary complex. The sequence is that of Potassium-transporting ATPase KdpC subunit from Bacillus thuringiensis subsp. konkukian (strain 97-27).